A 570-amino-acid polypeptide reads, in one-letter code: Sulfite reductase [NADPH] hemoprotein beta-component (570 aa).

[4Fe-4S] cluster is bound by residues cysteine 434, cysteine 440, cysteine 479, and cysteine 483. Residue cysteine 483 participates in siroheme binding.

Belongs to the nitrite and sulfite reductase 4Fe-4S domain family. Alpha(8)-beta(8). The alpha component is a flavoprotein, the beta component is a hemoprotein. Requires siroheme as cofactor. It depends on [4Fe-4S] cluster as a cofactor.

It catalyses the reaction hydrogen sulfide + 3 NADP(+) + 3 H2O = sulfite + 3 NADPH + 4 H(+). It participates in sulfur metabolism; hydrogen sulfide biosynthesis; hydrogen sulfide from sulfite (NADPH route): step 1/1. Component of the sulfite reductase complex that catalyzes the 6-electron reduction of sulfite to sulfide. This is one of several activities required for the biosynthesis of L-cysteine from sulfate. In Escherichia coli (strain ATCC 8739 / DSM 1576 / NBRC 3972 / NCIMB 8545 / WDCM 00012 / Crooks), this protein is Sulfite reductase [NADPH] hemoprotein beta-component.